Here is a 970-residue protein sequence, read N- to C-terminus: Polycystin-2 (970 aa).

The segment covering 1-11 (MVNSSRVQPQQ) has biased composition (polar residues). Residues 1-182 (MVNSSRVQPQ…GDPLHRHLPL (182 aa)) are disordered. Residues 1–221 (MVNSSRVQPQ…STDREKYLKS (221 aa)) lie on the Cytoplasmic side of the membrane. Residues 25–45 (GPGRLMAGGAIAGAGLAAPGG) are compositionally biased toward low complexity. Residues 47–60 (REQRGLEIEMERIR) show a composition bias toward basic and acidic residues. Low complexity predominate over residues 62–83 (AAARDPPAGASASPSPPLSSCS). Phosphoserine is present on residues serine 76 and serine 80. The span at 95–109 (EAEEEEEEEEVEGEE) shows a compositional bias: acidic residues. The segment covering 125–138 (RRSASSSAVSSAGA) has biased composition (low complexity). Arginine 139 is modified (omega-N-methylarginine). The segment covering 139–148 (RGRGLGGYHG) has biased composition (gly residues). The chain crosses the membrane as a helical span at residues 222–243 (VLRELATYLLFLIVLCILTYGM). Topologically, residues 244–470 (MSSSVYYYTR…PVKLIRYVTT (227 aa)) are extracellular. N-linked (GlcNAc...) asparagine glycosylation is found at asparagine 301, asparagine 307, and asparagine 330. Cysteine 333 and cysteine 346 are disulfide-bonded. N-linked (GlcNAc...) asparagine glycosylation is found at asparagine 364 and asparagine 377. Residues 471–491 (FDFFLAACEIIFCLFILYYVV) form a helical membrane-spanning segment. Residues 492–507 (EEILEIRIHKLHYFRS) are Cytoplasmic-facing. A helical membrane pass occupies residues 508–528 (FWNCLDVVIIVLSVVAIGINI). Residues 529-554 (YRTSNVEALLQFLEDQNTFPNFENLA) lie on the Extracellular side of the membrane. Residues 555 to 575 (YWQTQFNNIAAVIVFFVWIKL) form a helical membrane-spanning segment. Cholesterol is bound at residue glutamine 559. Residues 576-599 (FKFINFNRTMSQLSTTMSRCAKDL) lie on the Cytoplasmic side of the membrane. Residues 600–621 (FGFAIMFFIIFLAYAQLAYLVF) form a helical membrane-spanning segment. Topologically, residues 622-633 (GTQVDDFSTFQE) are extracellular. The pore-forming intramembrane region spans 634-648 (CIFTQFRIILGDINF). Leucine 643 contacts Ca(2+). The short motif at 643–645 (LGD) is the Selectivity filter element. Over 649–656 (AEIEEANR) the chain is Extracellular. The helical transmembrane segment at 657 to 677 (VLGPIYFTTFVFFMFFILLNM) threads the bilayer. The Cytoplasmic portion of the chain corresponds to 678-970 (FLAIINDTYS…GGNGSANIHV (293 aa)). An EF-hand domain is found at 750–785 (KGHTDAEIEAIFTKYDQDGDQELTEHEHQQMRDDLE). The Ca(2+) site is built by aspartate 765, aspartate 767, aspartate 769, glutamate 771, and glutamate 776. Residues 766–833 (QDGDQELTEH…HSSRRRGSIS (68 aa)) form a disordered region. A compositionally biased stretch (basic and acidic residues) spans 772–797 (LTEHEHQQMRDDLEKEREDLDLDHSS). The span at 798–809 (LPRPMSSRSFPR) shows a compositional bias: low complexity. Serine 803, serine 810, serine 814, and serine 831 each carry phosphoserine. The linker stretch occupies residues 805–824 (RSFPRSLDDSEEEDDDDSGH). The tract at residues 812–823 (DDSEEEDDDDSG) is important for interaction with PACS1 and PACS2. A coiled-coil region spans residues 835-874 (GVSYEEFQVLVRRVDRMEHSIGSIVSKIDAVIVKLEIMER). Positions 921 to 970 (DDAASQISHGLGTPLGLNGQPRPRSSRPSSSQSTEGMEGGGGNGSANIHV) are disordered. Residues 940 to 956 (QPRPRSSRPSSSQSTEG) show a composition bias toward low complexity.

The protein belongs to the polycystin family. Homotetramer. Component of the heterotetrameric polycystin channel complex with PKD1; the tetramer contains one PKD1 chain and three PKD2 chains. Isoform 1 interacts with PKD1 while isoform 3 does not. Interacts with PKD1L1; probably forms a Ca(2+) channel. Interacts with CD2AP. Interacts with HAX1. Interacts with NEK8. Part of a complex containing AKAP5, ADCY5, ADCY6 and PDE4C. Interacts (via C-terminus) with TRPV4 (via C-terminus). Interacts (via C-terminal acidic region) with PACS1 and PACS2; these interactions retain the protein in the endoplasmic reticulum and prevent trafficking to the cell membrane. Interacts with TMEM33. Form a heterotetramer with TRPC1 with a 2:2 stoichiometry; has distinct channel properties separate from PKD2 or TRPC1 homomers alone. Interacts with TMEM120A; TMEM120A inhibits PKD2 channel activity through the physical association of PKD2 with TMEM120A. Interacts (via N-terminus) with RYR2; regulates RYR2 channel activity. Post-translationally, N-glycosylated. The four subunits in a tetramer probably differ in the extent of glycosylation; simultaneous glycosylation of all experimentally validated sites would probably create steric hindrance. In terms of processing, phosphorylated. Phosphorylation is important for protein function; a mutant that lacks the N-terminal phosphorylation sites cannot complement a zebrafish pkd2-deficient mutant. PKD-mediated phosphorylation at the C-terminus regulates its function in the release of Ca(2+) stores from the endoplasmic reticulum. Phosphorylation at Ser-814 regulates PKD2 trafficking. Phosphorylation at Ser-76 is required for PKD2 trafficking to or retention at the lateral plasma membrane. Phosphorylation at Ser-803, Ser-814 and Ser-831 regulates PKD2 channel activity. Sumoylated by SUMO1; sumoylation regulates PKD2 membrane recycling and is necessary for intravascular pressure-induced arterial contractility. As to expression, expressed in mesenchymally derived structures in the developing embryo at day 12.5. In adult, mostly expressed in kidney.

It is found in the cell projection. The protein localises to the cilium membrane. The protein resides in the endoplasmic reticulum membrane. Its subcellular location is the cell membrane. It localises to the basolateral cell membrane. It is found in the cytoplasmic vesicle membrane. The protein localises to the golgi apparatus. The protein resides in the vesicle. Its subcellular location is the secreted. It localises to the extracellular exosome. It carries out the reaction K(+)(in) = K(+)(out). The enzyme catalyses Na(+)(in) = Na(+)(out). It catalyses the reaction Ca(2+)(in) = Ca(2+)(out). Channel activity is regulated by phosphorylation. Channel activity is regulated by intracellular Ca(2+). At the endoplasmic reticulum membrane (ER), TMEM33 enhances its channel activity. TMEM120A inhibits the channel activity of PKD2, and mediates mechanosensitivity of the PKD2-TMEM120A channel complex. PKD1/PKD2 complex on the plasma membrane is activated by PKD1 N-terminus. Its function is as follows. Forms a nonselective cation channel. Can function as a homotetrameric ion channel or can form heteromer with PKD1. Displays distinct function depending on its subcellular localization and regulation by its binding partners. Functions as a cation channel, with a preference for monovalent cations over divalent cations that allows K(+), Na(+) and Ca(2+) influx, with low selectivity for Ca(2+). Involved in fluid-flow mechanosensation in the primary cilium in renal epithelium. In the endoplasmic reticulum, likely functions as a K(+) channel to facilitate Ca(2+) release. The heterotetrameric PKD1/PKD2 channel has higher Ca(2+) permeability than homomeric PKD2 channel and acts as a primarily Ca(2+)-permeable channel. Interacts with and acts as a regulator of a number of other channels, such as TRPV4, TRPC1, IP3R, RYR2, ultimately further affecting intracellular signaling, to modulate intracellular Ca(2+) signaling. Together with TRPV4, forms mechano- and thermosensitive channels in cilium. In cardiomyocytes, PKD2 modulates Ca(2+) release from stimulated RYR2 receptors through direct association. Also involved in left-right axis specification via its role in sensing nodal flow; forms a complex with PKD1L1 in cilia to facilitate flow detection in left-right patterning. Acts as a regulator of cilium length together with PKD1. Mediates systemic blood pressure and contributes to the myogenic response in cerebral arteries though vasoconstriction. In Bos taurus (Bovine), this protein is Polycystin-2.